Reading from the N-terminus, the 265-residue chain is Cytochrome c oxidase subunit 3 (265 aa).

The next 6 membrane-spanning stretches (helical) occupy residues 16–36 (PWPI…VMYM), 41–61 (GGAT…FVWW), 84–104 (YGSI…FWAS), 162–182 (AVYA…FQGM), 200–220 (FLLA…FLIV), and 242–262 (AWYW…IYWW).

Belongs to the cytochrome c oxidase subunit 3 family. As to quaternary structure, component of the cytochrome c oxidase (complex IV, CIV), a multisubunit enzyme composed of a catalytic core of 3 subunits and several supernumerary subunits. The complex exists as a monomer or a dimer and forms supercomplexes (SCs) in the inner mitochondrial membrane with ubiquinol-cytochrome c oxidoreductase (cytochrome b-c1 complex, complex III, CIII).

The protein resides in the mitochondrion inner membrane. The catalysed reaction is 4 Fe(II)-[cytochrome c] + O2 + 8 H(+)(in) = 4 Fe(III)-[cytochrome c] + 2 H2O + 4 H(+)(out). In terms of biological role, component of the cytochrome c oxidase, the last enzyme in the mitochondrial electron transport chain which drives oxidative phosphorylation. The respiratory chain contains 3 multisubunit complexes succinate dehydrogenase (complex II, CII), ubiquinol-cytochrome c oxidoreductase (cytochrome b-c1 complex, complex III, CIII) and cytochrome c oxidase (complex IV, CIV), that cooperate to transfer electrons derived from NADH and succinate to molecular oxygen, creating an electrochemical gradient over the inner membrane that drives transmembrane transport and the ATP synthase. Cytochrome c oxidase is the component of the respiratory chain that catalyzes the reduction of oxygen to water. Electrons originating from reduced cytochrome c in the intermembrane space (IMS) are transferred via the dinuclear copper A center (CU(A)) of subunit 2 and heme A of subunit 1 to the active site in subunit 1, a binuclear center (BNC) formed by heme A3 and copper B (CU(B)). The BNC reduces molecular oxygen to 2 water molecules using 4 electrons from cytochrome c in the IMS and 4 protons from the mitochondrial matrix. The protein is Cytochrome c oxidase subunit 3 (COX3) of Zea mays (Maize).